We begin with the raw amino-acid sequence, 76 residues long: Exodeoxyribonuclease 7 small subunit (76 aa).

It belongs to the XseB family. Heterooligomer composed of large and small subunits.

It is found in the cytoplasm. It carries out the reaction Exonucleolytic cleavage in either 5'- to 3'- or 3'- to 5'-direction to yield nucleoside 5'-phosphates.. In terms of biological role, bidirectionally degrades single-stranded DNA into large acid-insoluble oligonucleotides, which are then degraded further into small acid-soluble oligonucleotides. This Geobacillus thermodenitrificans (strain NG80-2) protein is Exodeoxyribonuclease 7 small subunit.